We begin with the raw amino-acid sequence, 251 residues long: MLGSPLLTFPPLDEGILVKRYKRFLADVELVSGEIVTAHCANTGPMTGVLHPGGRVRIRHAPSPKRKLAWTWEQAEAPSAQGGLCWVGINTALANSLIRAAIEAGHLKQVLGPIAAIRAEVTYGSNRRSRIDLFLTPDANCSDTRPIYLEVKNTTWIEDSLALFPDTVTERGQKHLKELIGVLPESRAVLVPCLSRHDVQAFAPGDSADPRYGELFRLALTAGVEVIPCCFGFHLDKITWEGLRPTKTTQS.

This sequence belongs to the SfsA family.

This chain is Sugar fermentation stimulation protein homolog, found in Prochlorococcus marinus (strain MIT 9313).